A 138-amino-acid chain; its full sequence is MRVTQGTFSFLPDLTDEQINKQLAYIVSKGFSANVEYTDDPHPRNSYWELWGLPLFDVKDASAVMYEISSCRKAKPNYYIKVNAFDNTRGIESCVLSFIVNRPINEPGFLLQRQDFEGRTMKYSLHSYATEKPEGARY.

The protein belongs to the RuBisCO small chain family. As to quaternary structure, heterohexadecamer of 8 large and 8 small subunits.

Its subcellular location is the plastid. It localises to the chloroplast. RuBisCO catalyzes two reactions: the carboxylation of D-ribulose 1,5-bisphosphate, the primary event in carbon dioxide fixation, as well as the oxidative fragmentation of the pentose substrate in the photorespiration process. Both reactions occur simultaneously and in competition at the same active site. Although the small subunit is not catalytic it is essential for maximal activity. This chain is Ribulose bisphosphate carboxylase small subunit, found in Pyropia haitanensis (Red seaweed).